A 411-amino-acid polypeptide reads, in one-letter code: Lycopene beta cyclase (411 aa).

4–32 provides a ligand contact to NAD(+); that stretch reads ALVIGSGPAGLAIAAELAQRGLKVQGLSP.

It belongs to the lycopene cyclase family. The cofactor is FAD.

The enzyme catalyses a carotenoid psi-end group = a carotenoid beta-end derivative. It catalyses the reaction all-trans-lycopene = gamma-carotene. It carries out the reaction gamma-carotene = all-trans-beta-carotene. The catalysed reaction is all-trans-neurosporene = beta-zeacarotene. The protein operates within carotenoid biosynthesis; beta-carotene biosynthesis. It functions in the pathway carotenoid biosynthesis; beta-zeacarotene biosynthesis. With respect to regulation, inhibited by the bleaching herbicide 2-(4-methylphenoxy)triethylamine hydrochloride (MPTA). Catalyzes the double cyclization reaction which converts lycopene to beta-carotene. It also converts neurosporene to the monocyclic beta-zeacarotene but does not cyclize zeta-carotene. The sequence is that of Lycopene beta cyclase from Synechococcus elongatus (strain ATCC 33912 / PCC 7942 / FACHB-805) (Anacystis nidulans R2).